Here is a 366-residue protein sequence, read N- to C-terminus: Fructose-bisphosphate aldolase 2 (366 aa).

Residues Arg60 and Lys150 each coordinate substrate. Glu191 functions as the Proton acceptor in the catalytic mechanism. Lys233 functions as the Schiff-base intermediate with dihydroxyacetone-P in the catalytic mechanism.

Belongs to the class I fructose-bisphosphate aldolase family.

It catalyses the reaction beta-D-fructose 1,6-bisphosphate = D-glyceraldehyde 3-phosphate + dihydroxyacetone phosphate. Its pathway is carbohydrate degradation; glycolysis; D-glyceraldehyde 3-phosphate and glycerone phosphate from D-glucose: step 4/4. This chain is Fructose-bisphosphate aldolase 2 (aldo-2), found in Caenorhabditis elegans.